Consider the following 341-residue polypeptide: Glucokinase (341 aa).

18–23 (GDIGGT) lines the ATP pocket.

The protein belongs to the bacterial glucokinase family.

The protein localises to the cytoplasm. It catalyses the reaction D-glucose + ATP = D-glucose 6-phosphate + ADP + H(+). The polypeptide is Glucokinase (Rhizobium etli (strain ATCC 51251 / DSM 11541 / JCM 21823 / NBRC 15573 / CFN 42)).